The sequence spans 465 residues: Pleckstrin homology domain-containing family S member 1 (465 aa).

A PH domain is found at E14–Q129. Polar residues predominate over residues P159–N173. Disordered regions lie at residues P159–H179 and E258–H283. Over residues E258–P271 the composition is skewed to basic and acidic residues.

This Homo sapiens (Human) protein is Pleckstrin homology domain-containing family S member 1.